The chain runs to 217 residues: Ribulose-phosphate 3-epimerase (217 aa).

Residue S6 participates in substrate binding. A divalent metal cation is bound by residues H29, D31, and H62. Residue D31 is the Proton acceptor of the active site. Substrate-binding positions include H62, 138 to 141 (GFGG), 171 to 173 (DGG), and 193 to 194 (GS). A divalent metal cation is bound at residue D171. D171 functions as the Proton donor in the catalytic mechanism.

The protein belongs to the ribulose-phosphate 3-epimerase family. It depends on a divalent metal cation as a cofactor.

It carries out the reaction D-ribulose 5-phosphate = D-xylulose 5-phosphate. The protein operates within carbohydrate degradation. Catalyzes the reversible epimerization of D-ribulose 5-phosphate to D-xylulose 5-phosphate. In Helicobacter pylori (strain ATCC 700392 / 26695) (Campylobacter pylori), this protein is Ribulose-phosphate 3-epimerase.